A 433-amino-acid polypeptide reads, in one-letter code: KICSTOR complex protein ITFG2 (433 aa).

An FG-GAP 1; atypical repeat occupies 19–48 (FPHAICLGDVDNDTLNELVVGDTSGKVSVY). Ser-104 is subject to Phosphoserine. One copy of the FG-GAP 2; atypical repeat lies at 126–155 (NTKVMLISDIDGDGCRELVVGYTDRVVRAF). Ser-220 bears the Phosphoserine mark.

As to quaternary structure, part of the KICSTOR complex composed of KPTN, ITFG2, KICS2 and SZT2. SZT2 probably serves as a link between the other three proteins in the KICSTOR complex and may mediate the direct interaction with the GATOR complex via GATOR1. The KICSTOR complex interacts directly with the GATOR1 complex and most probably indirectly with the GATOR2 complex in an amino acid-independent manner.

The protein resides in the lysosome membrane. As part of the KICSTOR complex functions in the amino acid-sensing branch of the TORC1 signaling pathway. Recruits, in an amino acid-independent manner, the GATOR1 complex to the lysosomal membranes and allows its interaction with GATOR2 and the RAG GTPases. Functions upstream of the RAG GTPases and is required to negatively regulate mTORC1 signaling in absence of amino acids. In absence of the KICSTOR complex mTORC1 is constitutively localized to the lysosome and activated. The KICSTOR complex is also probably involved in the regulation of mTORC1 by glucose. The chain is KICSTOR complex protein ITFG2 from Pongo abelii (Sumatran orangutan).